The chain runs to 112 residues: Lutropin subunit beta (112 aa).

Intrachain disulfides connect Cys4–Cys52, Cys18–Cys67, Cys21–Cys105, Cys29–Cys83, Cys33–Cys85, and Cys88–Cys95. N-linked (GlcNAc...) asparagine glycosylation is present at Asn8.

It belongs to the glycoprotein hormones subunit beta family. Heterodimer of a common alpha chain and a unique beta chain which confers biological specificity to thyrotropin, lutropin, follitropin and gonadotropin.

It is found in the secreted. This chain is Lutropin subunit beta (lhb), found in Aquarana catesbeiana (American bullfrog).